The sequence spans 804 residues: Endoplasmin (804 aa).

A signal peptide spans 1–21; the sequence is MRVLWVLGLCCVLLTFGFVRA. The short motif at 42–44 is the SRT pseudosubstrate motif element; it reads SRT. A glycan (N-linked (GlcNAc...) asparagine) is linked at Asn62. Ser64 carries the post-translational modification Phosphoserine. An N-linked (GlcNAc...) asparagine glycan is attached at Asn107. Residues Asn107, Asp149, and Asn162 each contribute to the ATP site. Lys168 is subject to N6-(2-hydroxyisobutyryl)lysine. Ser172 is subject to Phosphoserine. Phe199 contributes to the ATP binding site. Residue Asn217 is glycosylated (N-linked (GlcNAc...) asparagine). Residues 288 to 323 are disordered; that stretch reads TVEEPLEEDETAQEEKEEADDEAAVEEEEEEKKPKT. Positions 289-317 are enriched in acidic residues; it reads VEEPLEEDETAQEEKEEADDEAAVEEEEE. Residue Ser403 is modified to Phosphoserine. Lys404 is subject to N6-succinyllysine. Asn445 carries an N-linked (GlcNAc...) asparagine glycan. Ser447 carries the phosphoserine modification. Lys479 bears the N6-acetyllysine mark. N-linked (GlcNAc...) asparagine glycosylation is found at Asn481 and Asn502. Lys633 carries the post-translational modification N6-succinyllysine. The tract at residues 749 to 804 is disordered; the sequence is IDPEAQVEEEPEEEPEDTTEDTTDDSEQDEEETDAGAEEEEEEQETEKEPTEKDEL. Residues 753–794 show a composition bias toward acidic residues; it reads AQVEEEPEEEPEDTTEDTTDDSEQDEEETDAGAEEEEEEQET. Basic and acidic residues predominate over residues 795-804; the sequence is EKEPTEKDEL. Residues 801-804 carry the Prevents secretion from ER motif; it reads KDEL.

It belongs to the heat shock protein 90 family. In terms of assembly, homodimer; disulfide-linked. Component of an EIF2 complex at least composed of CELF1/CUGBP1, CALR, CALR3, EIF2S1, EIF2S2, HSP90B1 and HSPA5. Part of a large chaperone multiprotein complex comprising DNAJB11, HSP90B1, HSPA5, HYOU, PDIA2, PDIA4, PDIA6, PPIB, SDF2L1, UGGT1 and very small amounts of ERP29, but not, or at very low levels, CALR nor CANX. Interacts with AIMP1; regulates its retention in the endoplasmic reticulum. Hyperglycosylated form interacts with OS9; promoting its degradation by the endoplasmic reticulum associated degradation (ERAD). Interacts with CNPY3. This interaction is disrupted in the presence of ATP. Interacts with TLR4 and TLR9, but not with TLR3. Interacts with MZB1 in a calcium-dependent manner. Interacts with METTL23. Interacts with IL1B; the interaction facilitates cargo translocation into the ERGIC. Interacts with EIF2AK3. Phosphorylated by CK2. In terms of processing, N-glycosylated cotranslationally at Asn-217 by STT3A-containing OST-A complex: this glycosylation is constitutive. In response to various stress, 5 additional facultative sites (Asn-62, Asn-107, Asn-445, Asn-481 and Asn-502) can be glycosylated post-translationally by STT3B-containing OST-B complex, leading to a hyperglycosylated form that is degraded by the ER-associated degradation (ERAD) pathway. In normal conditions, the OST-A complex together with CCDC134 prevent glycosylation at facultative sites during protein folding, thereby preventing hyperglycosylation. Mechanistically, nascent HSP90B1 is tethered during translation to a specialized CCDC134-containing translocon that forms a microenvironment for its folding, in which STT3A associates with the SRT pseudosubstrate motif, and prevents access to facultative glycosylation sites until folding is completed, rendering its facultative sites inaccessible to the OST-B complex.

Its subcellular location is the endoplasmic reticulum lumen. It is found in the sarcoplasmic reticulum lumen. It localises to the melanosome. The catalysed reaction is ATP + H2O = ADP + phosphate + H(+). ATP-dependent chaperone involved in the processing of proteins in the endoplasmic reticulum, regulating their transport. Together with MESD, acts as a modulator of the Wnt pathway by promoting the folding of LRP6, a coreceptor of the canonical Wnt pathway. When associated with CNPY3, required for proper folding of Toll-like receptors. Promotes folding and trafficking of TLR4 to the cell surface. May participate in the unfolding of cytosolic leaderless cargos (lacking the secretion signal sequence) such as the interleukin 1/IL-1 to facilitate their translocation into the ERGIC (endoplasmic reticulum-Golgi intermediate compartment) and secretion; the translocation process is mediated by the cargo receptor TMED10. The polypeptide is Endoplasmin (Rattus norvegicus (Rat)).